The chain runs to 259 residues: Protein SODIUM POTASSIUM ROOT DEFECTIVE 2 (259 aa).

Residues 141–165 form a disordered region; sequence PDSITGSVDQDPAKTVEAEAPAGED. The segment covering 151–165 has biased composition (basic and acidic residues); sequence DPAKTVEAEAPAGED. Residues 180–246 form the HMA domain; that stretch reads QQVVVLKVSL…KVKNAQFWTN (67 aa). Positions 191 and 194 each coordinate a metal cation.

This chain is Protein SODIUM POTASSIUM ROOT DEFECTIVE 2, found in Arabidopsis thaliana (Mouse-ear cress).